Here is a 283-residue protein sequence, read N- to C-terminus: Thymidylate synthase (283 aa).

Residue Arg22 coordinates dUMP. Cys160 serves as the catalytic Nucleophile. Residues 180-183 (RSCD), Asn191, and 221-223 (HIY) contribute to the dUMP site. Residue Asp183 participates in (6R)-5,10-methylene-5,6,7,8-tetrahydrofolate binding. A (6R)-5,10-methylene-5,6,7,8-tetrahydrofolate-binding site is contributed by Ser282.

It belongs to the thymidylate synthase family. Bacterial-type ThyA subfamily. Homodimer.

The protein resides in the cytoplasm. It catalyses the reaction dUMP + (6R)-5,10-methylene-5,6,7,8-tetrahydrofolate = 7,8-dihydrofolate + dTMP. Its pathway is pyrimidine metabolism; dTTP biosynthesis. Functionally, catalyzes the reductive methylation of 2'-deoxyuridine-5'-monophosphate (dUMP) to 2'-deoxythymidine-5'-monophosphate (dTMP) while utilizing 5,10-methylenetetrahydrofolate (mTHF) as the methyl donor and reductant in the reaction, yielding dihydrofolate (DHF) as a by-product. This enzymatic reaction provides an intracellular de novo source of dTMP, an essential precursor for DNA biosynthesis. The polypeptide is Thymidylate synthase (Shewanella halifaxensis (strain HAW-EB4)).